The sequence spans 397 residues: 3-ketoacyl-CoA thiolase, mitochondrial (397 aa).

The N-terminal 16 residues, 1–16 (MALLRGVFVVAAKRTP), are a transit peptide targeting the mitochondrion; not cleaved. Residue K25 is modified to N6-acetyllysine; alternate. Residue K25 is modified to N6-succinyllysine; alternate. At K45 the chain carries N6-succinyllysine. The Acyl-thioester intermediate role is filled by C92. At T119 the chain carries Phosphothreonine. S121 carries the post-translational modification Phosphoserine. A Phosphotyrosine modification is found at Y127. A Phosphothreonine modification is found at T136. K137 carries the N6-acetyllysine; alternate modification. Residue K137 is modified to N6-succinyllysine; alternate. At S140 the chain carries Phosphoserine. K143, K171, K191, and K209 each carry N6-acetyllysine; alternate. Residues K143, K171, K191, and K209 each carry the N6-succinyllysine; alternate modification. K211, K212, and K214 each carry N6-succinyllysine. Positions 224 and 227 each coordinate CoA. K234 bears the N6-acetyllysine; alternate mark. The residue at position 234 (K234) is an N6-succinyllysine; alternate. The residue at position 240 (K240) is an N6-succinyllysine. K241 is modified (N6-acetyllysine). S251 contributes to the CoA binding site. N6-acetyllysine occurs at positions 269 and 270. An N6-acetyllysine; alternate modification is found at K305. K305 carries the N6-succinyllysine; alternate modification. Residue S310 is modified to Phosphoserine. K312 carries the post-translational modification N6-acetyllysine; alternate. K312 is modified (N6-succinyllysine; alternate). At S333 the chain carries Phosphoserine. An N6-acetyllysine mark is found at K340 and K375. Residue C382 is the Proton donor/acceptor of the active site.

This sequence belongs to the thiolase-like superfamily. Thiolase family. In terms of assembly, homotetramer. Interacts with BNIP3.

It is found in the mitochondrion. It catalyses the reaction an acyl-CoA + acetyl-CoA = a 3-oxoacyl-CoA + CoA. It carries out the reaction 2 acetyl-CoA = acetoacetyl-CoA + CoA. The enzyme catalyses acetyl-CoA + H2O = acetate + CoA + H(+). The catalysed reaction is propanoyl-CoA + H2O = propanoate + CoA + H(+). It catalyses the reaction butanoyl-CoA + H2O = butanoate + CoA + H(+). It carries out the reaction hexanoyl-CoA + H2O = hexanoate + CoA + H(+). The enzyme catalyses octanoyl-CoA + H2O = octanoate + CoA + H(+). The catalysed reaction is decanoyl-CoA + H2O = decanoate + CoA + H(+). It catalyses the reaction dodecanoyl-CoA + H2O = dodecanoate + CoA + H(+). It carries out the reaction tetradecanoyl-CoA + H2O = tetradecanoate + CoA + H(+). The enzyme catalyses hexadecanoyl-CoA + H2O = hexadecanoate + CoA + H(+). Its pathway is lipid metabolism; fatty acid beta-oxidation. Functionally, in the production of energy from fats, this is one of the enzymes that catalyzes the last step of the mitochondrial beta-oxidation pathway, an aerobic process breaking down fatty acids into acetyl-CoA. Using free coenzyme A/CoA, catalyzes the thiolytic cleavage of medium- to long-chain unbranched 3-oxoacyl-CoAs into acetyl-CoA and a fatty acyl-CoA shortened by two carbon atoms. Also catalyzes the condensation of two acetyl-CoA molecules into acetoacetyl-CoA and could be involved in the production of ketone bodies. Also displays hydrolase activity on various fatty acyl-CoAs. Thereby, could be responsible for the production of acetate in a side reaction to beta-oxidation. Abolishes BNIP3-mediated apoptosis and mitochondrial damage. In Pongo abelii (Sumatran orangutan), this protein is 3-ketoacyl-CoA thiolase, mitochondrial (ACAA2).